The sequence spans 306 residues: 4-diphosphocytidyl-2-C-methyl-D-erythritol kinase (306 aa).

Lysine 23 is a catalytic residue. 108-118 (PIAAGIGGGSA) serves as a coordination point for ATP. Aspartate 150 is an active-site residue.

This sequence belongs to the GHMP kinase family. IspE subfamily.

The enzyme catalyses 4-CDP-2-C-methyl-D-erythritol + ATP = 4-CDP-2-C-methyl-D-erythritol 2-phosphate + ADP + H(+). The protein operates within isoprenoid biosynthesis; isopentenyl diphosphate biosynthesis via DXP pathway; isopentenyl diphosphate from 1-deoxy-D-xylulose 5-phosphate: step 3/6. Its function is as follows. Catalyzes the phosphorylation of the position 2 hydroxy group of 4-diphosphocytidyl-2C-methyl-D-erythritol. In Rhodopseudomonas palustris (strain BisB18), this protein is 4-diphosphocytidyl-2-C-methyl-D-erythritol kinase.